The following is a 164-amino-acid chain: Lipoprotein signal peptidase (164 aa).

4 helical membrane passes run 2–22 (MSLL…AIVL), 40–60 (VVIT…AFSF), 70–90 (WLFS…MAKA), and 99–119 (LAYS…VVYG). Active-site residues include aspartate 123 and aspartate 142. The helical transmembrane segment at 138–158 (FNVADMAISCGAVFIILDGFI) threads the bilayer.

This sequence belongs to the peptidase A8 family.

The protein localises to the cell inner membrane. It carries out the reaction Release of signal peptides from bacterial membrane prolipoproteins. Hydrolyzes -Xaa-Yaa-Zaa-|-(S,diacylglyceryl)Cys-, in which Xaa is hydrophobic (preferably Leu), and Yaa (Ala or Ser) and Zaa (Gly or Ala) have small, neutral side chains.. It participates in protein modification; lipoprotein biosynthesis (signal peptide cleavage). Its function is as follows. This protein specifically catalyzes the removal of signal peptides from prolipoproteins. The polypeptide is Lipoprotein signal peptidase (Tolumonas auensis (strain DSM 9187 / NBRC 110442 / TA 4)).